A 303-amino-acid polypeptide reads, in one-letter code: MKIAILSRDGALYSCKRLREAAEARKHSVEIIDPLSCYMNINSAAPSVHYRGRRLDKYDAVIPRIGSQITFYGTAVLRQFEMLGSYPLNNSVAVIRARDKLHSLQLLAREGIDLPITGFAHSPDDTGDLIAMVGGAPLVVKLVEGTQGIGVVLAETRQAAESVIDAFRGLNAHILVQEYVREAQGKDIRCLVIGNRVVAAIERQAKAGEFRSNLHRGGSANNVKITAQERAIAIKATKTLGLNVAGVDILRADRGPLVMEVNASPGLEGIETTTGFDIAGMMIEFIEQNTQRRFATSASISKS.

Residues 104-287 (LQLLAREGID…IAGMMIEFIE (184 aa)) enclose the ATP-grasp domain. ATP contacts are provided by residues K141, 178–179 (EY), D187, and 211–213 (RSN). Mg(2+)-binding residues include D248, E260, and N262. Residues D248, E260, and N262 each contribute to the Mn(2+) site.

It belongs to the RimK family. The cofactor is Mg(2+). Mn(2+) serves as cofactor.

The sequence is that of Probable alpha-L-glutamate ligase from Pectobacterium carotovorum subsp. carotovorum (strain PC1).